The sequence spans 238 residues: tRNA (guanine-N(7)-)-methyltransferase (238 aa).

Residues Glu68, Glu93, Asp120, and Asp143 each contribute to the S-adenosyl-L-methionine site. Residue Asp143 is part of the active site. Residues Lys147, Asp179, and 216 to 219 (TKFE) each bind substrate.

The protein belongs to the class I-like SAM-binding methyltransferase superfamily. TrmB family.

The enzyme catalyses guanosine(46) in tRNA + S-adenosyl-L-methionine = N(7)-methylguanosine(46) in tRNA + S-adenosyl-L-homocysteine. Its pathway is tRNA modification; N(7)-methylguanine-tRNA biosynthesis. In terms of biological role, catalyzes the formation of N(7)-methylguanine at position 46 (m7G46) in tRNA. This is tRNA (guanine-N(7)-)-methyltransferase from Shewanella frigidimarina (strain NCIMB 400).